The sequence spans 186 residues: Chromophore lyase CpcS/CpeS 1 (186 aa).

This sequence belongs to the CpcS/CpeS biliprotein lyase family.

In terms of biological role, covalently attaches a chromophore to Cys residue(s) of phycobiliproteins. This is Chromophore lyase CpcS/CpeS 1 from Synechocystis sp. (strain ATCC 27184 / PCC 6803 / Kazusa).